A 360-amino-acid chain; its full sequence is Phospho-N-acetylmuramoyl-pentapeptide-transferase (360 aa).

10 helical membrane-spanning segments follow: residues 21 to 41, 73 to 93, 94 to 114, 132 to 152, 168 to 188, 199 to 219, 239 to 259, 263 to 283, 288 to 308, and 338 to 358; these read YLSFRAIVSILTALGISLWMG, TMGGVMILAAITITVLLWADL, TNPYVWAVLAVLLGYGAVGFV, WKYFWQSAIALVVAFALYAHG, VMPQLGLMYIVLTYFVIVGTS, GLAIMPTVLVAAGFAAIAWAT, LVVVCTAMVGAGLGFLWFNTY, VFMGDVGALALGGALGTIAVL, FVLVIMGGVFVMETLSVILQV, and VIVRFWIISIVLVLIGLATLK.

Belongs to the glycosyltransferase 4 family. MraY subfamily. Requires Mg(2+) as cofactor.

The protein resides in the cell inner membrane. The catalysed reaction is UDP-N-acetyl-alpha-D-muramoyl-L-alanyl-gamma-D-glutamyl-meso-2,6-diaminopimeloyl-D-alanyl-D-alanine + di-trans,octa-cis-undecaprenyl phosphate = di-trans,octa-cis-undecaprenyl diphospho-N-acetyl-alpha-D-muramoyl-L-alanyl-D-glutamyl-meso-2,6-diaminopimeloyl-D-alanyl-D-alanine + UMP. Its pathway is cell wall biogenesis; peptidoglycan biosynthesis. In terms of biological role, catalyzes the initial step of the lipid cycle reactions in the biosynthesis of the cell wall peptidoglycan: transfers peptidoglycan precursor phospho-MurNAc-pentapeptide from UDP-MurNAc-pentapeptide onto the lipid carrier undecaprenyl phosphate, yielding undecaprenyl-pyrophosphoryl-MurNAc-pentapeptide, known as lipid I. This chain is Phospho-N-acetylmuramoyl-pentapeptide-transferase, found in Vibrio cholerae serotype O1 (strain M66-2).